We begin with the raw amino-acid sequence, 79 residues long: Sec-independent protein translocase protein TatA (79 aa).

A helical membrane pass occupies residues 1 to 21; that stretch reads MGGISIWQLLIVALIVVLLFG. A disordered region spans residues 43 to 79; it reads MSSEEDKKALEDTEAAKTAQTTQQATEKKPESNKEQA. A compositionally biased stretch (basic and acidic residues) spans 46 to 57; that stretch reads EEDKKALEDTEA. Residues 58-67 are compositionally biased toward low complexity; it reads AKTAQTTQQA. The segment covering 68 to 79 has biased composition (basic and acidic residues); the sequence is TEKKPESNKEQA.

The protein belongs to the TatA/E family. As to quaternary structure, the Tat system comprises two distinct complexes: a TatABC complex, containing multiple copies of TatA, TatB and TatC subunits, and a separate TatA complex, containing only TatA subunits. Substrates initially bind to the TatABC complex, which probably triggers association of the separate TatA complex to form the active translocon.

The protein localises to the cell inner membrane. Its function is as follows. Part of the twin-arginine translocation (Tat) system that transports large folded proteins containing a characteristic twin-arginine motif in their signal peptide across membranes. TatA could form the protein-conducting channel of the Tat system. This Shewanella baltica (strain OS223) protein is Sec-independent protein translocase protein TatA.